A 91-amino-acid polypeptide reads, in one-letter code: Uteroglobin (91 aa).

The signal sequence occupies residues 1–21 (MKLAITLALVTLALLCSPASA).

It belongs to the secretoglobin family. In terms of assembly, antiparallel homodimer; disulfide-linked. Interaction with LMBR1L is controversial. Synthesized in the uterus and lung.

The protein resides in the secreted. Functionally, uteroglobin binds progesterone specifically and with high affinity. It may regulate progesterone concentrations reaching the blastocyst. It is also a potent inhibitor of phospholipase A2. The chain is Uteroglobin (SCGB1A1) from Oryctolagus cuniculus (Rabbit).